A 294-amino-acid polypeptide reads, in one-letter code: Casein kinase II subunit beta (294 aa).

Disordered stretches follow at residues 66–90 (DHNT…SKRN) and 269–294 (KRME…MASE). Residues 70 to 87 (DNTTTNTSNNNDSRNGTS) show a composition bias toward low complexity. A compositionally biased stretch (acidic residues) spans 273-288 (EDDEEEEDEVEEEDDD).

This sequence belongs to the casein kinase 2 subunit beta family. In terms of assembly, tetramer composed of two alpha chains, one beta chain and one beta' chain. In terms of processing, phosphorylated by alpha subunit.

Functionally, regulatory subunit of casein kinase II/CK2. As part of the kinase complex regulates the basal catalytic activity of the alpha subunit a constitutively active serine/threonine-protein kinase that phosphorylates a large number of substrates containing acidic residues C-terminal to the phosphorylated serine or threonine. This chain is Casein kinase II subunit beta (CKB1), found in Candida albicans (Yeast).